The sequence spans 295 residues: Protoheme IX farnesyltransferase 2 (295 aa).

Transmembrane regions (helical) follow at residues 9–29 (ITKP…FFLA), 36–56 (LAIF…GCVF), 85–105 (VALV…YYVA), 108–128 (LAAL…SLYL), 135–155 (GTLV…VAVS), 163–183 (LTLL…IAIF), 209–229 (ILLY…SGYA), 230–250 (GMSY…MAWT), and 263–283 (KLFV…SVDF).

Belongs to the UbiA prenyltransferase family. Protoheme IX farnesyltransferase subfamily.

The protein localises to the cell inner membrane. It carries out the reaction heme b + (2E,6E)-farnesyl diphosphate + H2O = Fe(II)-heme o + diphosphate. Its pathway is porphyrin-containing compound metabolism; heme O biosynthesis; heme O from protoheme: step 1/1. Functionally, converts heme B (protoheme IX) to heme O by substitution of the vinyl group on carbon 2 of heme B porphyrin ring with a hydroxyethyl farnesyl side group. The protein is Protoheme IX farnesyltransferase 2 of Pseudomonas fluorescens (strain ATCC BAA-477 / NRRL B-23932 / Pf-5).